A 337-amino-acid chain; its full sequence is MVAPSRLPSHEEQSAAAAADGSATPSQGIPVVDLGVLINGAADERSRAIRDLGRACEDWGFFMVTNHGVPEALREAIMDACKELFRLPLEEKKEYMRAKPMDPIRIGTGFYSVVDAVPCRRDYLKMFSHPEFHCPEKPAKLREIATEYATCTRALLLELTKAISESLGLAGGRLSEALNLESCFQILVGNHYPACSRPDEQAMGLSAHSDHGLLTLLFQNGVDGLQVKHDGEWLLAKPLPGSFFVIAGDQLEIVTNGRYKGVLHRAVVGGEQSRMSFVSLIGPCMDTVVEPLPEMAADGRGLEFRGIRYRDYMEMQQSNSINEKTALDIVRVMHQAG.

Residues methionine 1–proline 25 form a disordered region. Residues asparagine 179–proline 283 form the Fe2OG dioxygenase domain. Histidine 208, aspartate 210, and histidine 264 together coordinate Fe cation. Arginine 274 contributes to the 2-oxoglutarate binding site.

This sequence belongs to the iron/ascorbate-dependent oxidoreductase family. Fe(2+) is required as a cofactor. L-ascorbate serves as cofactor. In terms of tissue distribution, expressed in shoots.

It is found in the cytoplasm. The enzyme catalyses melatonin + 2-oxoglutarate + O2 = 2-hydroxymelatonin + succinate + CO2. Involved in melatonin degradation. Catalyzes the hydroxylation of melatonin to produce 2-hydroxymelatonin. The protein is 2-oxoglutarate-dependent dioxygenase 19 of Oryza sativa subsp. japonica (Rice).